Reading from the N-terminus, the 158-residue chain is 2-C-methyl-D-erythritol 2,4-cyclodiphosphate synthase (158 aa).

A divalent metal cation-binding residues include D9 and H11. 4-CDP-2-C-methyl-D-erythritol 2-phosphate contacts are provided by residues 9–11 (DVH) and 35–36 (HS). H43 is an a divalent metal cation binding site. 4-CDP-2-C-methyl-D-erythritol 2-phosphate contacts are provided by residues 57 to 59 (DIG), 62 to 66 (FPDTD), 133 to 136 (TTTE), F140, and R143.

The protein belongs to the IspF family. Homotrimer. A divalent metal cation serves as cofactor.

The catalysed reaction is 4-CDP-2-C-methyl-D-erythritol 2-phosphate = 2-C-methyl-D-erythritol 2,4-cyclic diphosphate + CMP. It participates in isoprenoid biosynthesis; isopentenyl diphosphate biosynthesis via DXP pathway; isopentenyl diphosphate from 1-deoxy-D-xylulose 5-phosphate: step 4/6. In terms of biological role, involved in the biosynthesis of isopentenyl diphosphate (IPP) and dimethylallyl diphosphate (DMAPP), two major building blocks of isoprenoid compounds. Catalyzes the conversion of 4-diphosphocytidyl-2-C-methyl-D-erythritol 2-phosphate (CDP-ME2P) to 2-C-methyl-D-erythritol 2,4-cyclodiphosphate (ME-CPP) with a corresponding release of cytidine 5-monophosphate (CMP). The sequence is that of 2-C-methyl-D-erythritol 2,4-cyclodiphosphate synthase from Geobacillus kaustophilus (strain HTA426).